The sequence spans 253 residues: 5'/3'-nucleotidase SurE (253 aa).

Asp8, Asp9, Ser39, and Asn92 together coordinate a divalent metal cation.

Belongs to the SurE nucleotidase family. The cofactor is a divalent metal cation.

The protein localises to the cytoplasm. It catalyses the reaction a ribonucleoside 5'-phosphate + H2O = a ribonucleoside + phosphate. It carries out the reaction a ribonucleoside 3'-phosphate + H2O = a ribonucleoside + phosphate. The catalysed reaction is [phosphate](n) + H2O = [phosphate](n-1) + phosphate + H(+). In terms of biological role, nucleotidase with a broad substrate specificity as it can dephosphorylate various ribo- and deoxyribonucleoside 5'-monophosphates and ribonucleoside 3'-monophosphates with highest affinity to 3'-AMP. Also hydrolyzes polyphosphate (exopolyphosphatase activity) with the preference for short-chain-length substrates (P20-25). Might be involved in the regulation of dNTP and NTP pools, and in the turnover of 3'-mononucleotides produced by numerous intracellular RNases (T1, T2, and F) during the degradation of various RNAs. This Shigella boydii serotype 18 (strain CDC 3083-94 / BS512) protein is 5'/3'-nucleotidase SurE.